Consider the following 317-residue polypeptide: tRNA(Ile)-lysidine synthase (317 aa).

Ser30–Ser35 is a binding site for ATP.

It belongs to the tRNA(Ile)-lysidine synthase family.

It localises to the cytoplasm. The catalysed reaction is cytidine(34) in tRNA(Ile2) + L-lysine + ATP = lysidine(34) in tRNA(Ile2) + AMP + diphosphate + H(+). Its function is as follows. Ligates lysine onto the cytidine present at position 34 of the AUA codon-specific tRNA(Ile) that contains the anticodon CAU, in an ATP-dependent manner. Cytidine is converted to lysidine, thus changing the amino acid specificity of the tRNA from methionine to isoleucine. The polypeptide is tRNA(Ile)-lysidine synthase (Chlamydia felis (strain Fe/C-56) (Chlamydophila felis)).